A 307-amino-acid polypeptide reads, in one-letter code: Small ribosomal subunit biogenesis GTPase RsgA (307 aa).

The CP-type G domain maps to G82–V240. Residues N131–D134 and G182–S190 each bind GTP. Residues C264, C269, H271, and C277 each coordinate Zn(2+).

Belongs to the TRAFAC class YlqF/YawG GTPase family. RsgA subfamily. As to quaternary structure, monomer. Associates with 30S ribosomal subunit, binds 16S rRNA. Zn(2+) is required as a cofactor.

The protein resides in the cytoplasm. Its function is as follows. One of several proteins that assist in the late maturation steps of the functional core of the 30S ribosomal subunit. Helps release RbfA from mature subunits. May play a role in the assembly of ribosomal proteins into the subunit. Circularly permuted GTPase that catalyzes slow GTP hydrolysis, GTPase activity is stimulated by the 30S ribosomal subunit. This Gemmatimonas aurantiaca (strain DSM 14586 / JCM 11422 / NBRC 100505 / T-27) protein is Small ribosomal subunit biogenesis GTPase RsgA.